Here is a 408-residue protein sequence, read N- to C-terminus: Phosphoenolpyruvate/phosphate translocator 1, chloroplastic (408 aa).

A chloroplast-targeting transit peptide spans 1-85 (MQSSAVFSLS…SLDTNRFRTA (85 aa)). Ala86 is modified (N-acetylalanine). 8 helical membrane-spanning segments follow: residues 105–125 (VLEL…FNIY), 137–157 (MTVT…MWVL), 165–185 (ISGA…LGNL), 198–218 (FTHT…AMFL), 222–242 (PTPW…LASI), 283–303 (ITLF…VTFF), 324–346 (IYTK…YMIL), and 377–396 (VSPV…FLYS). The EamA domain occupies 124–241 (IYNKQVLKAL…PIVGGVALAS (118 aa)).

This sequence belongs to the TPT transporter family. PPT (TC 2.A.7.9) subfamily. As to expression, expressed in root columella, lateral root cap and root vasculature tissue. In leaves, highly expressed in xylem parenchyma cells. In flowers, expressed in sepals, petals, filaments of the stamens, anthers and stigma.

The protein resides in the plastid. It is found in the chloroplast membrane. Phosphoenolpyruvate/phosphate translocator that transports phosphoenolpyruvate (PEP), 2-phosphoglycerate, 3-phosphoglycerate and dihydroxyacetone phosphate. Imports PEP to the chloroplast stroma as one substrate of the shikimate pathway, from which aromatic amino acids and a variety of secondary products derive. Required for correct leaf mesophyll cell development and expression of chlorophyll a/b binding protein 3 (CAB3). This chain is Phosphoenolpyruvate/phosphate translocator 1, chloroplastic (PPT1), found in Arabidopsis thaliana (Mouse-ear cress).